A 332-amino-acid chain; its full sequence is RNA polymerase II holoenzyme cyclin-like subunit (332 aa).

One can recognise a Cyclin N-terminal domain in the interval 74-175 (RIYCYFLIMK…LIEELQSYMI (102 aa)).

It belongs to the cyclin family. Cyclin C subfamily. Component of the SRB8-11 complex, a regulatory module of the Mediator complex.

It is found in the nucleus. Its function is as follows. Component of the SRB8-11 complex. The SRB8-11 complex is a regulatory module of the Mediator complex which is itself involved in regulation of basal and activated RNA polymerase II-dependent transcription. The SRB8-11 complex may be involved in the transcriptional repression of a subset of genes regulated by Mediator. It may inhibit the association of the Mediator complex with RNA polymerase II to form the holoenzyme complex. The SRB8-11 complex phosphorylates the C-terminal domain (CTD) of the largest subunit of RNA polymerase II. The protein is RNA polymerase II holoenzyme cyclin-like subunit (SSN8) of Eremothecium gossypii (strain ATCC 10895 / CBS 109.51 / FGSC 9923 / NRRL Y-1056) (Yeast).